Here is a 200-residue protein sequence, read N- to C-terminus: ATP-dependent Clp protease proteolytic subunit (200 aa).

The active-site Nucleophile is the Ser-101. His-126 is a catalytic residue.

The protein belongs to the peptidase S14 family. In terms of assembly, component of the chloroplastic Clp protease core complex.

It localises to the plastid. The protein localises to the chloroplast stroma. It catalyses the reaction Hydrolysis of proteins to small peptides in the presence of ATP and magnesium. alpha-casein is the usual test substrate. In the absence of ATP, only oligopeptides shorter than five residues are hydrolyzed (such as succinyl-Leu-Tyr-|-NHMec, and Leu-Tyr-Leu-|-Tyr-Trp, in which cleavage of the -Tyr-|-Leu- and -Tyr-|-Trp bonds also occurs).. In terms of biological role, cleaves peptides in various proteins in a process that requires ATP hydrolysis. Has a chymotrypsin-like activity. Plays a major role in the degradation of misfolded proteins. This is ATP-dependent Clp protease proteolytic subunit from Adiantum capillus-veneris (Maidenhair fern).